Here is a 188-residue protein sequence, read N- to C-terminus: UPF0200 protein M164_1169 (188 aa).

Residue 15–22 participates in ATP binding; that stretch reads GMPGSGKS.

This sequence belongs to the UPF0200 family.

The protein is UPF0200 protein M164_1169 of Saccharolobus islandicus (strain M.16.4 / Kamchatka #3) (Sulfolobus islandicus).